A 466-amino-acid chain; its full sequence is tRNA(Ile)-lysidine synthase (466 aa).

26–31 provides a ligand contact to ATP; the sequence is SGGSDS.

Belongs to the tRNA(Ile)-lysidine synthase family.

The protein resides in the cytoplasm. It carries out the reaction cytidine(34) in tRNA(Ile2) + L-lysine + ATP = lysidine(34) in tRNA(Ile2) + AMP + diphosphate + H(+). In terms of biological role, ligates lysine onto the cytidine present at position 34 of the AUA codon-specific tRNA(Ile) that contains the anticodon CAU, in an ATP-dependent manner. Cytidine is converted to lysidine, thus changing the amino acid specificity of the tRNA from methionine to isoleucine. The sequence is that of tRNA(Ile)-lysidine synthase from Oceanobacillus iheyensis (strain DSM 14371 / CIP 107618 / JCM 11309 / KCTC 3954 / HTE831).